The primary structure comprises 230 residues: Nucleoside diphosphate kinase 2, chloroplastic (230 aa).

Residues 1–64 (MEAMAVFSGS…SYPKTFRTRS (64 aa)) constitute a chloroplast transit peptide. Residues Lys90, Phe138, Arg166, Thr172, Arg183, and Asn193 each contribute to the ATP site. His196 functions as the Pros-phosphohistidine intermediate in the catalytic mechanism.

The protein belongs to the NDK family. The cofactor is Mg(2+).

Its subcellular location is the plastid. It localises to the chloroplast. It carries out the reaction a 2'-deoxyribonucleoside 5'-diphosphate + ATP = a 2'-deoxyribonucleoside 5'-triphosphate + ADP. The enzyme catalyses a ribonucleoside 5'-diphosphate + ATP = a ribonucleoside 5'-triphosphate + ADP. Functionally, major role in the synthesis of nucleoside triphosphates other than ATP. The ATP gamma phosphate is transferred to the NDP beta phosphate via a ping-pong mechanism, using a phosphorylated active-site intermediate. This chain is Nucleoside diphosphate kinase 2, chloroplastic (NDPK2), found in Pisum sativum (Garden pea).